Here is a 1937-residue protein sequence, read N- to C-terminus: MSSDQEMAIFGEAAPYLRKSEKERIEAQNRPFDAKTSVFVAEPKESFVKGTIQSREGGKVTVKTDAGATLTVKEDQVFPMNPPKYDKIEDMAMMTHLHEPAVLYNLKERYAAWMIYTYSGLFCVTVNPYKWLPVYNPEVVTAYRGKKRQEAPPHIFSISDNAYQFMLTDRENQSILITGESGAGKTVNTKRVIQYFATIAVTGEKKKEEPGKMQGTLEDQIISANPLLEAFGNAKTVRNDNSSRFGKFIRIHFGTTGKLASADIETYLLEKSRVTFQLKAERSYHIFYQITSNRKPELIEMLLITTNPYDYPYVSQGEISVASIDDQEELIATDSAIDILGFTNDEKVSIYKLTGAVMHYGNLKFKQKQREEQAEPDGTEVADKAAYLQGLNSADLLKALCYPRVKVGNEFVTKGQTVEQVTNAVGALAKAVYDKMFLWMVARINQQLDTKQPRQYFIGVLDIAGFEIFDFNSLEQLCINFTNEKLQQFFNHHMFVLEQEEYKKEGIEWTFIDFGMDLAACIELIEKPMGIFSILEEECMFPKATDTSFKNKLYEQHLGKSSNFQKPKVVKGKAEAHFSLIHYAGVVDYNITGWLDKNKDPLNETVVGLYQKSSVKTLALLFSGAQTADAEAGGVKKGGKKKGSSFQTVSALFRENLNKLMTNLRSTHPHFVRCIIPNETKTPGAMEHELVLHQLRCNGVLEGIRICRKGFPSRILYADFKQRYKVLNASAIPEGQFIDSKKASEKLLASIDIDHTQYKFGHTKVFFKAGLLGLLEEMRDDKLAQIITRTQARCRGFLARVEYQKMVERRESIFCIQYNIRAFMNVKHWPWMKLFFRIKPLLKSAETEKEMATMKEEFQKTKDELAKSEAKRKELEEKMVSLLKEKNDLQLQVQSEAEGLADAEERCDQLIKTKIQLEAKIKEVTERAEDEEEINAELTAKKRKLEDECSELKKDIDDLELTLAKVEKEKHATENKVKNLTEEMAGLDETIAKLTKEKKALQEAHQQTLDDLQAEEDKVNTLTKAKTKLEQQVDDLEGSLEQEKKLRMDLERAKRKLEGDLKLAQESIMDIENEKQQLDEKLKKKEFEIGNLQSKIEDEQALGIQLQKKIKELQARIEELEEEIEAERASRAKAEKQRSDLSRELEEISERLEEAGGATSAQIEMNKKREAEFQKMRRDLEEATLQHEATAAALRKKHADSVAELGEQIDNLQRVKQKLEKEKSEMKMEIDDLASNVETVSKAKGNLEKMCRTLEDQVSELKSKEEEQQRLINDLTAQRGRLQTEAGEFSRQLDEKEALVSQLSRGKQAFTQQIEELKRQLEEEIKAKNALAHALQSSRHDCDLLREQYEEEQESKAELQRALSKANSEVAQWRTKYETDAIQRTEELEEAKKKLAQRLQAAEEHVEAVNAKCASLEKTKQRLQNEVEDLMLDVERTNAACAALDKKQRNFDKILAEWKQKYEETHAELEASQKEARSLGTELFKMKNAYEESLDQLETLKRENKNLQQEISDLTEQIAEGGKRIHELEKIKKQVEQEKSELQAALEEAEASLEHEEGKILRIQLELNQVKSEIDRKIAEKDEEIDQLKRNHVRVVETMQTMLDAEIRSRNDAIRIKKKMEGDLNEMEIQLNHANRMAAEALRNYRNTQGILKDTQLHLDDALRGQEDLKEQLAMVERRANLLQAEIEELRATLEQTERSRKIAEQELLDASERVQLLHTQNTSLINTKKKLETDISQLQGEMEDILQEARNAEEKAKKAITDAAMMAEELKKEQDTSAHLERMKKNLEQTVKDLQQRLDEAEQLALKGGKKQIQKLEARVRELEGEVESEQKRSAEAIKGLRKHERRVKELTYQTEEDRKNILRLQDLVDKLQAKVKSYKRQAEEAEEQSNTNLSKFRKLQHELEEAEERADIAESQVNKLRVKSREVHTKIISEE.

Residues Asp33–Pro82 enclose the Myosin N-terminal SH3-like domain. Phosphothreonine is present on residues Thr64 and Thr69. Residues Asp86–Asp780 form the Myosin motor domain. An N6,N6,N6-trimethyllysine modification is found at Lys130. Gly179–Thr186 is an ATP binding site. At Tyr387 the chain carries Phosphotyrosine. Residue Thr417 is modified to Phosphothreonine. Ser623 carries the post-translational modification Phosphoserine. The tract at residues Leu657–Glu679 is actin-binding. His755 carries the pros-methylhistidine modification. Positions Lys759–Gly773 are actin-binding. One can recognise an IQ domain in the interval Leu783 to Ser812. A coiled-coil region spans residues Leu841–Glu1937. Ser1094 bears the Phosphoserine mark. Disordered stretches follow at residues Ile1124–Leu1145 and Arg1151–Glu1170. The span at Ala1126–Leu1145 shows a compositional bias: basic and acidic residues. Ser1160 and Ser1235 each carry phosphoserine. Thr1239 carries the post-translational modification Phosphothreonine. A Phosphoserine modification is found at Ser1241. Residue Thr1253 is modified to Phosphothreonine. Position 1259 is a phosphoserine (Ser1259). Position 1284 is a phosphothreonine (Thr1284). Ser1290, Ser1301, and Ser1304 each carry phosphoserine. Phosphotyrosine is present on Tyr1462. Thr1465 bears the Phosphothreonine mark. Residue Ser1472 is modified to Phosphoserine. Phosphotyrosine is present on Tyr1490. Ser1493 carries the phosphoserine modification. Thr1499 bears the Phosphothreonine mark. At Ser1512 the chain carries Phosphoserine. The residue at position 1515 (Thr1515) is a Phosphothreonine. A phosphoserine mark is found at Ser1540, Ser1552, Ser1572, Ser1712, and Ser1724. Phosphothreonine is present on residues Thr1728 and Thr1734. Ser1737 is subject to Phosphoserine. Residues Gln1883–Asp1913 form a disordered region.

This sequence belongs to the TRAFAC class myosin-kinesin ATPase superfamily. Myosin family. In terms of assembly, muscle myosin is a hexameric protein that consists of 2 heavy chain subunits (MHC), 2 alkali light chain subunits (MLC) and 2 regulatory light chain subunits (MLC-2). Interacts with GCSAM.

Its subcellular location is the cytoplasm. The protein resides in the myofibril. Functionally, myosins are actin-based motor molecules with ATPase activity essential for muscle contraction. The chain is Myosin-2 (MYH2) from Equus caballus (Horse).